The following is a 258-amino-acid chain: Beta carbonic anhydrase 3 (258 aa).

Positions Met1–Ala28 are cleaved as a signal peptide. A coiled-coil region spans residues Gly24–Ser54. Thr35 is modified (phosphothreonine). Ser95 bears the Phosphoserine mark. Cys201 is modified (S-nitrosocysteine).

It belongs to the beta-class carbonic anhydrase family. In terms of tissue distribution, strongly expressed in aerial tissues including leaves, stems, flowers and siliques, and, to a lower extent, in roots.

It is found in the cytoplasm. The protein localises to the cytosol. The catalysed reaction is hydrogencarbonate + H(+) = CO2 + H2O. Reversible hydration of carbon dioxide. In Arabidopsis thaliana (Mouse-ear cress), this protein is Beta carbonic anhydrase 3 (BCA3).